Here is a 539-residue protein sequence, read N- to C-terminus: Interleukin-2 receptor subunit beta (539 aa).

A signal peptide spans 1–26; sequence MATIALPWSLSLYVFLLLLATPWASA. Topologically, residues 27–240 are extracellular; it reads AVKNCSHLEC…RTRPADPMKE (214 aa). N-linked (GlcNAc...) asparagine glycans are attached at residues Asn30, Asn43, Asn55, and Asn71. Cys36 and Cys46 form a disulfide bridge. Cys74 and Cys86 form a disulfide bridge. The Fibronectin type-III domain maps to 135–235; it reads APHSLQVLHI…QPLTFRTRPA (101 aa). Residues Asn150 and Asn216 are each glycosylated (N-linked (GlcNAc...) asparagine). A WSXWS motif motif is present at residues 221–225; it reads WSPWS. Residues 241–268 form a helical membrane-spanning segment; it reads ILPMSWLRYLLLVLGCFSGFFSCVYILV. At 269–539 the chain is on the cytoplasmic side; sequence KCRYLGPWLK…LQAQDSVHLI (271 aa). The Box 1 motif signature appears at 281–289; that stretch reads LKCHIPDPS. Disordered stretches follow at residues 395-419, 440-465, and 477-516; these read VEED…GEQD, PNTA…LPSL, and LERM…QGPI.

Belongs to the type I cytokine receptor family. Type 4 subfamily. Non-covalent dimer of an alpha and a beta subunit. IL2R exists in 3 different forms: a high affinity dimer, an intermediate affinity monomer (beta subunit), and a low affinity monomer (alpha subunit). The high and intermediate affinity forms also associate with a gamma subunit. Interacts with SHB upon interleukin stimulation.

It localises to the cell membrane. The protein localises to the cell surface. In terms of biological role, receptor for interleukin-2. This beta subunit is involved in receptor mediated endocytosis and transduces the mitogenic signals of IL2. Probably in association with IL15RA, involved in the stimulation of neutrophil phagocytosis by IL15. The chain is Interleukin-2 receptor subunit beta (Il2rb) from Mus musculus (Mouse).